Consider the following 313-residue polypeptide: Porphobilinogen deaminase (313 aa).

Cysteine 242 is modified (S-(dipyrrolylmethanemethyl)cysteine).

This sequence belongs to the HMBS family. In terms of assembly, monomer. It depends on dipyrromethane as a cofactor.

The enzyme catalyses 4 porphobilinogen + H2O = hydroxymethylbilane + 4 NH4(+). The protein operates within porphyrin-containing compound metabolism; protoporphyrin-IX biosynthesis; coproporphyrinogen-III from 5-aminolevulinate: step 2/4. Functionally, tetrapolymerization of the monopyrrole PBG into the hydroxymethylbilane pre-uroporphyrinogen in several discrete steps. The polypeptide is Porphobilinogen deaminase (Yersinia enterocolitica serotype O:8 / biotype 1B (strain NCTC 13174 / 8081)).